The chain runs to 185 residues: Ribosome-recycling factor (185 aa).

It belongs to the RRF family.

Its subcellular location is the cytoplasm. Its function is as follows. Responsible for the release of ribosomes from messenger RNA at the termination of protein biosynthesis. May increase the efficiency of translation by recycling ribosomes from one round of translation to another. In Mycobacterium bovis (strain BCG / Pasteur 1173P2), this protein is Ribosome-recycling factor.